A 382-amino-acid polypeptide reads, in one-letter code: MTGKPSIAALIVAAGQGVRSGGGVPKQYRRIGGKAVLAHAVDALARHPAIGSVQVVIGAGQEDLHAEAVGGRTLPPPVTGGATRRDSVIAGLAAVDADIVLIHDAARPFLPAAVIDRLIAALDGSDGAVPALAVADTLAKGDALLGDAVPRDGLHRVQTPQAFRRADILAAHRAWDPAREATDDAQVARAHGLSVAIVEGDRSLEKLTFAADFEAAEERMAMISRTAMGFDVHGFTAGDGVQLGGVRIAHDRALAGHSDADVALHALTDALLGTIAAGDIGSHFPPSDQRWKGADSAMFLAHARDLVAAAGGIVDFVDLTIICEAPKVGPHRAAIRDRIAALLGLTAGQVSVKATTTERLGFTGRREGIAAQAVATVRVPSI.

Residues 1-225 form a 2-C-methyl-D-erythritol 4-phosphate cytidylyltransferase region; the sequence is MTGKPSIAAL…AEERMAMISR (225 aa). The segment at 225-382 is 2-C-methyl-D-erythritol 2,4-cyclodiphosphate synthase; the sequence is RTAMGFDVHG…AVATVRVPSI (158 aa). A divalent metal cation-binding residues include Asp-231 and His-233. 4-CDP-2-C-methyl-D-erythritol 2-phosphate contacts are provided by residues 231–233 and 257–258; these read DVH and HS. His-265 contributes to the a divalent metal cation binding site. Residues 279–281, 355–358, Phe-362, and Arg-365 contribute to the 4-CDP-2-C-methyl-D-erythritol 2-phosphate site; these read DIG and TTTE.

The protein in the N-terminal section; belongs to the IspD/TarI cytidylyltransferase family. IspD subfamily. In the C-terminal section; belongs to the IspF family. The cofactor is a divalent metal cation.

The enzyme catalyses 2-C-methyl-D-erythritol 4-phosphate + CTP + H(+) = 4-CDP-2-C-methyl-D-erythritol + diphosphate. The catalysed reaction is 4-CDP-2-C-methyl-D-erythritol 2-phosphate = 2-C-methyl-D-erythritol 2,4-cyclic diphosphate + CMP. The protein operates within isoprenoid biosynthesis; isopentenyl diphosphate biosynthesis via DXP pathway; isopentenyl diphosphate from 1-deoxy-D-xylulose 5-phosphate: step 2/6. It participates in isoprenoid biosynthesis; isopentenyl diphosphate biosynthesis via DXP pathway; isopentenyl diphosphate from 1-deoxy-D-xylulose 5-phosphate: step 4/6. Its function is as follows. Bifunctional enzyme that catalyzes the formation of 4-diphosphocytidyl-2-C-methyl-D-erythritol from CTP and 2-C-methyl-D-erythritol 4-phosphate (MEP) (IspD), and catalyzes the conversion of 4-diphosphocytidyl-2-C-methyl-D-erythritol 2-phosphate (CDP-ME2P) to 2-C-methyl-D-erythritol 2,4-cyclodiphosphate (ME-CPP) with a corresponding release of cytidine 5-monophosphate (CMP) (IspF). In Rhizorhabdus wittichii (strain DSM 6014 / CCUG 31198 / JCM 15750 / NBRC 105917 / EY 4224 / RW1) (Sphingomonas wittichii), this protein is Bifunctional enzyme IspD/IspF.